Consider the following 330-residue polypeptide: Aspartate--ammonia ligase (330 aa).

This sequence belongs to the class-II aminoacyl-tRNA synthetase family. AsnA subfamily.

It localises to the cytoplasm. The enzyme catalyses L-aspartate + NH4(+) + ATP = L-asparagine + AMP + diphosphate + H(+). The protein operates within amino-acid biosynthesis; L-asparagine biosynthesis; L-asparagine from L-aspartate (ammonia route): step 1/1. The protein is Aspartate--ammonia ligase of Salmonella newport (strain SL254).